The sequence spans 189 residues: MGDKIFHNLSGKTLVATPHAITKGIYHKSLIYMLSHTEEGAIGLIFNRLVNHIDLKSFFKIKNDEITTPVMVPIYLGGPVEHEKGFFLHSSDYNKNLLLDFQNDLAVSSNLEISEDIAFGKGPKNSLFIVGYTAWKPGQLEEELEKNLWLVMDCNKEFIFADNPESKWHNALKHLGIDEIHFSSQIGNA.

Belongs to the UPF0301 (AlgH) family.

In Rickettsia felis (strain ATCC VR-1525 / URRWXCal2) (Rickettsia azadi), this protein is UPF0301 protein RF_0044.